The chain runs to 109 residues: MSQRKPWEILIRPIITEKSNRLMEDYNKYTFEVALDASKPEIKEAVEKLFNVKVKKVNTMIVKPKKKRVWERFRQYGTTKKWKKAIVTLEKGINRHPWVCSEVRCRDGC.

This sequence belongs to the universal ribosomal protein uL23 family. As to quaternary structure, part of the 50S ribosomal subunit. Contacts protein L29, and trigger factor when it is bound to the ribosome.

Its function is as follows. One of the early assembly proteins it binds 23S rRNA. One of the proteins that surrounds the polypeptide exit tunnel on the outside of the ribosome. Forms the main docking site for trigger factor binding to the ribosome. The protein is Large ribosomal subunit protein uL23 of Aquifex pyrophilus.